A 250-amino-acid polypeptide reads, in one-letter code: Formylaminopyrimidine transport permease protein ThiX (250 aa).

Transmembrane regions (helical) follow at residues 5–25 (YQALEPTLFFLMLMVIWEISA), 62–82 (IISIGLALSIVLGILLSLLMF), 94–114 (LLVASQTIPVIALAPIFVLWF), 115–135 (GYSIWSKVAVTVLLTFFPITV), 172–192 (LPSFLTGLRIAVPLAVIGAAV), and 216–236 (PGVFAPIFILSLLGILGFAAI). In terms of domain architecture, ABC transmembrane type-1 spans 56 to 237 (LPATLAIISI…LGILGFAAIK (182 aa)).

Belongs to the binding-protein-dependent transport system permease family. The complex is likely composed of an ATP-binding protein (ThiZ), a transmembrane protein (ThiX) and a solute-binding protein (ThiY).

The protein localises to the cell membrane. Its pathway is cofactor biosynthesis; thiamine diphosphate biosynthesis. In terms of biological role, participates in a thiamine pyrimidine salvage pathway as part of the ABC transporter complex ThiXYZ involved in the import of thiamine degradation products such as the formylaminopyrimidine N-formyl-4-amino-5-aminomethyl-2-methylpyrimidine (FAMP). Is probably responsible for the translocation of the substrate across the membrane. The chain is Formylaminopyrimidine transport permease protein ThiX from Halalkalibacterium halodurans (strain ATCC BAA-125 / DSM 18197 / FERM 7344 / JCM 9153 / C-125) (Bacillus halodurans).